A 145-amino-acid chain; its full sequence is Basic phospholipase A2 S2-22 (145 aa).

A signal peptide spans 1–19 (MYPAHLLVLLAVCVSLLGA). A propeptide spanning residues 20–27 (SDIPPQPL) is cleaved from the precursor. Intrachain disulfides connect Cys-38-Cys-99, Cys-54-Cys-144, Cys-56-Cys-72, Cys-71-Cys-127, Cys-78-Cys-120, Cys-88-Cys-113, and Cys-106-Cys-118. The Ca(2+) site is built by Tyr-55, Gly-57, and Gly-59. Residue His-75 is part of the active site. Asp-76 contributes to the Ca(2+) binding site. The active site involves Asp-121.

This sequence belongs to the phospholipase A2 family. Group I subfamily. D49 sub-subfamily. Ca(2+) is required as a cofactor. Expressed by the venom gland.

Its subcellular location is the secreted. It catalyses the reaction a 1,2-diacyl-sn-glycero-3-phosphocholine + H2O = a 1-acyl-sn-glycero-3-phosphocholine + a fatty acid + H(+). Snake venom phospholipase A2 (PLA2) that inhibits collagen-induced platelet aggregation. PLA2 catalyzes the calcium-dependent hydrolysis of the 2-acyl groups in 3-sn-phosphoglycerides. This chain is Basic phospholipase A2 S2-22, found in Austrelaps superbus (Lowland copperhead snake).